The chain runs to 361 residues: Alanine racemase 2 (361 aa).

Residue lysine 30 is the Proton acceptor; specific for D-alanine of the active site. The residue at position 30 (lysine 30) is an N6-(pyridoxal phosphate)lysine. Arginine 122 is a substrate binding site. The Proton acceptor; specific for L-alanine role is filled by tyrosine 256. Methionine 303 is a binding site for substrate.

Belongs to the alanine racemase family. Pyridoxal 5'-phosphate is required as a cofactor.

It catalyses the reaction L-alanine = D-alanine. Its pathway is amino-acid biosynthesis; D-alanine biosynthesis; D-alanine from L-alanine: step 1/1. Its function is as follows. Catalyzes the interconversion of L-alanine and D-alanine. May also act on other amino acids. The sequence is that of Alanine racemase 2 (alr2) from Staphylococcus aureus (strain COL).